The sequence spans 648 residues: Protein KASH5 (648 aa).

The Cytoplasmic portion of the chain corresponds to M1 to H606. The interval P206–A228 is disordered. Residues A230–G420 are a coiled coil. A compositionally biased stretch (acidic residues) spans E473 to S497. Residues E473–S545 are disordered. Residues P607 to F627 traverse the membrane as a helical; Anchor for type IV membrane protein segment. Over S628–V648 the chain is Perinuclear space.

As to quaternary structure, core component the LINC complex which is composed of inner nuclear membrane SUN domain-containing proteins coupled to outer nuclear membrane KASH domain-containing nesprins. SUN and KASH domain-containing proteins seem to bind each other promiscuously; however, differentially expression of LINC complex constituents is giving rise to specific assemblies. At least SUN1/2-containing core LINC complexes are proposed to be hexameric composed of three protomers of each KASH and SUN domain-containing protein. Interacts with SUN1; this interaction mediates its telomere localization by forming a SUN1:KASH5 LINC complex. Component of a probable SUN2:KASH5 LINC complex. Self-associates. Interacts with DYNC1H1, DCTN1, DYNC1I1/2 and PAFAH1B1; suggesting the association with the dynein-dynactin motor complex. Restricted to the testis and the early ootidogenesis ovary. Expressed in spermatocytes and oocytes (at protein level).

The protein resides in the nucleus outer membrane. The protein localises to the nucleus. Its subcellular location is the chromosome. It is found in the telomere. It localises to the nucleus envelope. As a component of the LINC (LInker of Nucleoskeleton and Cytoskeleton) complex, involved in the connection between the nuclear lamina and the cytoskeleton. The nucleocytoplasmic interactions established by the LINC complex play an important role in the transmission of mechanical forces across the nuclear envelope and in nuclear movement and positioning. Required for telomere attachment to nuclear envelope in the prophase of meiosis and for rapid telomere prophase movements implicating a SUN1/2:KASH5 LINC complex in which SUN1 and SUN2 seem to act at least partial redundantly. Required for homolog pairing during meiotic prophase in spermatocytes and probably oocytes. Essential for male and female gametogenesis. Recruits cytoplasmic dynein to telomere attachment sites at the nuclear envelope in spermatocytes. In oocytes is involved in meiotic resumption and spindle formation. The protein is Protein KASH5 of Mus musculus (Mouse).